The sequence spans 403 residues: MYRDPEAASPGAPSRDVLLVSAIITVSLSVTVVLCGLCHWCQRKLGKRYKNSLETVGTPDSGRGRSEKKAIKLPAGGKAVNTAPVPGQTPHDESDRRTEPRSSVSDLVNSLTSEMLMLSPGSEEDEAHEGCSRENLGRIQFSVGYNFQESTLTVKIMKAQELPAKDFSGTSDPFVKIYLLPDKKHKLETKVKRKNLNPHWNETFLFEGFPYEKVVQRILYLQVLDYDRFSRNDPIGEVSIPLNKVDLTQMQTFWKDLKPCSDGSGSRGELLLSLCYNPSANSIIVNIIKARNLKAMDIGGTSDPYVKVWLMYKDKRVEKKKTVTMKRNLNPIFNESFAFDIPTEKLRETTIIITVMDKDKLSRNDVIGKIYLSWKSGPGEVKHWKDMIARPRQPVAQWHQLKA.

Residues 1-16 lie on the Vesicular side of the membrane; the sequence is MYRDPEAASPGAPSRD. Residues 17 to 37 form a helical membrane-spanning segment; that stretch reads VLLVSAIITVSLSVTVVLCGL. Residues 38–403 are Cytoplasmic-facing; that stretch reads CHWCQRKLGK…PVAQWHQLKA (366 aa). A Phosphoserine modification is found at serine 52. The tract at residues 53–106 is disordered; it reads LETVGTPDSGRGRSEKKAIKLPAGGKAVNTAPVPGQTPHDESDRRTEPRSSVSD. Threonine 58 carries the phosphothreonine modification. Position 61 is a phosphoserine (serine 61). A compositionally biased stretch (basic and acidic residues) spans 90-100; the sequence is PHDESDRRTEP. Residues serine 119 and serine 122 each carry the phosphoserine modification. C2 domains are found at residues 135 to 255 and 266 to 399; these read NLGR…TFWK and SRGE…AQWH. Positions 166, 172, 225, 227, 230, 233, 297, 303, 357, 359, 362, and 365 each coordinate Ca(2+).

The protein belongs to the synaptotagmin family. Homodimer. Can also form heterodimers with SYT6, SYT9 and SYT10. Interacts with calmodulin (CALM1, CALM2 or CALM3). Interacts with CD63; required for localization to lysosomes. Interacts with APP. The cofactor is Ca(2+). Post-translationally, palmitoylated at its vesicular N-terminus; palmitoylation is required for localization to lysosome and phagocytosis in macrophages. As to expression, expressed in a variety of adult and fetal tissues.

It is found in the cell membrane. Its subcellular location is the presynaptic cell membrane. The protein resides in the cytoplasmic vesicle. It localises to the secretory vesicle. The protein localises to the synaptic vesicle membrane. It is found in the lysosome membrane. Its subcellular location is the phagosome membrane. The protein resides in the peroxisome membrane. It localises to the secretory vesicle membrane. In terms of biological role, ca(2+) sensor involved in Ca(2+)-dependent exocytosis of secretory and synaptic vesicles through Ca(2+) and phospholipid binding to the C2 domain. Ca(2+) induces binding of the C2-domains to phospholipid membranes and to assembled SNARE-complexes; both actions contribute to triggering exocytosis. SYT7 binds Ca(2+) with high affinity and slow kinetics compared to other synaptotagmins. Involved in Ca(2+)-triggered lysosomal exocytosis, a major component of the plasma membrane repair. Ca(2+)-regulated delivery of lysosomal membranes to the cell surface is also involved in the phagocytic uptake of particles by macrophages. Ca(2+)-triggered lysosomal exocytosis also plays a role in bone remodeling by regulating secretory pathways in osteoclasts and osteoblasts. In case of infection, involved in participates cell invasion by Trypanosoma cruzi via Ca(2+)-triggered lysosomal exocytosis. Involved in cholesterol transport from lysosome to peroxisome by promoting membrane contacts between lysosomes and peroxisomes: probably acts by promoting vesicle fusion by binding phosphatidylinositol-4,5-bisphosphate on peroxisomal membranes. Acts as a key mediator of synaptic facilitation, a process also named short-term synaptic potentiation: synaptic facilitation takes place at synapses with a low initial release probability and is caused by influx of Ca(2+) into the axon terminal after spike generation, increasing the release probability of neurotransmitters. Probably mediates synaptic facilitation by directly increasing the probability of release. May also contribute to synaptic facilitation by regulating synaptic vesicle replenishment, a process required to ensure that synaptic vesicles are ready for the arrival of the next action potential: SYT7 is required for synaptic vesicle replenishment by acting as a sensor for Ca(2+) and by forming a complex with calmodulin. Also acts as a regulator of Ca(2+)-dependent insulin and glucagon secretion in beta-cells. Triggers exocytosis by promoting fusion pore opening and fusion pore expansion in chromaffin cells. Also regulates the secretion of some non-synaptic secretory granules of specialized cells. The sequence is that of Synaptotagmin-7 from Homo sapiens (Human).